Here is a 202-residue protein sequence, read N- to C-terminus: Na(+)-translocating NADH-quinone reductase subunit E (202 aa).

6 consecutive transmembrane segments (helical) span residues 11 to 31, 41 to 61, 81 to 101, 114 to 134, 144 to 164, and 180 to 200; these read SIFM…FLAV, LGVA…IIYF, FLGF…LEMV, GIYL…LFMV, LVYG…LAGI, and LGIT…FSGI.

The protein belongs to the NqrDE/RnfAE family. In terms of assembly, composed of six subunits; NqrA, NqrB, NqrC, NqrD, NqrE and NqrF.

It is found in the cell inner membrane. It catalyses the reaction a ubiquinone + n Na(+)(in) + NADH + H(+) = a ubiquinol + n Na(+)(out) + NAD(+). NQR complex catalyzes the reduction of ubiquinone-1 to ubiquinol by two successive reactions, coupled with the transport of Na(+) ions from the cytoplasm to the periplasm. NqrA to NqrE are probably involved in the second step, the conversion of ubisemiquinone to ubiquinol. In Psychromonas ingrahamii (strain DSM 17664 / CCUG 51855 / 37), this protein is Na(+)-translocating NADH-quinone reductase subunit E.